We begin with the raw amino-acid sequence, 465 residues long: RuvB-like helicase 2 (465 aa).

Glycine 73–threonine 80 provides a ligand contact to ATP.

The protein belongs to the RuvB family. Forms homohexameric rings. May form a dodecamer with pont made of two stacked hexameric rings. Component of the chromatin remodeling Ino80 complex.

It localises to the nucleus. It catalyses the reaction ATP + H2O = ADP + phosphate + H(+). Its function is as follows. Acts as a transcriptional coactivator in Wg signaling. Functionally, proposed core component of the chromatin remodeling Ino80 complex which is involved in transcriptional regulation, DNA replication and probably DNA repair. This chain is RuvB-like helicase 2, found in Aedes aegypti (Yellowfever mosquito).